A 310-amino-acid chain; its full sequence is Apolipoprotein E (310 aa).

An N-terminal signal peptide occupies residues 1 to 18 (MKVLWPALVVTLLAGCRA). Tandem repeats lie at residues 77–98 (ALMDDTMKEVKACKSELEEQLG), 99–120 (PVAEETKARVSKELQAAQARLG), 121–142 (ADMEEVRNRLAQYRGELQAMVG), 143–164 (QSTEELRGRLNAHLRKLRKRLL), 165–186 (RDAEDLQQRLAVYQAGIREGAE), 187–208 (RSVNTLREHLGPLAEQAATMHT), 209–226 (LVSKPLQERAEAWAQRLR), and 227–248 (GRLEKAGFPVGDRLDEVREQVQ). An 8 X 22 AA approximate tandem repeats region spans residues 77–248 (ALMDDTMKEV…RLDEVREQVQ (172 aa)). Positions 155–165 (HLRKLRKRLLR) are LDL and other lipoprotein receptors binding. Residue 159–162 (LRKR) participates in heparin binding. The tract at residues 207 to 283 (HTLVSKPLQE…SWFEPLVQDM (77 aa)) is lipid-binding and lipoprotein association. 222–229 (AQRLRGRL) provides a ligand contact to heparin. The segment at 259–310 (NQVRLQAEAFQGRLKSWFEPLVQDMQQKWAELVEKVQLALRAVPTSVPSEKQ) is homooligomerization. The tract at residues 271–283 (RLKSWFEPLVQDM) is specificity for association with VLDL.

The protein belongs to the apolipoprotein A1/A4/E family. Homotetramer. May interact with ABCA1; functionally associated with ABCA1 in the biogenesis of HDLs. May interact with APP/A4 amyloid-beta peptide; the interaction is extremely stable in vitro but its physiological significance is unclear. May interact with MAPT. May interact with MAP2. In the cerebrospinal fluid, interacts with secreted SORL1. Interacts with PMEL; this allows the loading of PMEL luminal fragment on ILVs to induce fibril nucleation. In terms of processing, APOE exists as multiple glycosylated and sialylated glycoforms within cells and in plasma. The extent of glycosylation and sialylation are tissue and context specific. Glycated in plasma VLDL. Post-translationally, phosphorylated by FAM20C in the extracellular medium.

It localises to the secreted. The protein resides in the extracellular space. The protein localises to the extracellular matrix. Its subcellular location is the extracellular vesicle. It is found in the endosome. It localises to the multivesicular body. Its function is as follows. APOE is an apolipoprotein, a protein associating with lipid particles, that mainly functions in lipoprotein-mediated lipid transport between organs via the plasma and interstitial fluids. APOE is a core component of plasma lipoproteins and is involved in their production, conversion and clearance. Apolipoproteins are amphipathic molecules that interact both with lipids of the lipoprotein particle core and the aqueous environment of the plasma. As such, APOE associates with chylomicrons, chylomicron remnants, very low density lipoproteins (VLDL) and intermediate density lipoproteins (IDL) but shows a preferential binding to high-density lipoproteins (HDL). It also binds a wide range of cellular receptors including the LDL receptor/LDLR and the very low-density lipoprotein receptor/VLDLR that mediate the cellular uptake of the APOE-containing lipoprotein particles. Finally, APOE also has a heparin-binding activity and binds heparan-sulfate proteoglycans on the surface of cells, a property that supports the capture and the receptor-mediated uptake of APOE-containing lipoproteins by cells. The protein is Apolipoprotein E (APOE) of Dicerorhinus sumatrensis harrissoni (Bornean rhinoceros).